The following is an 812-amino-acid chain: Hyaluronate lyase HylB (812 aa).

Positions 1–32 (MFGTPSRRTFLTASALSAMALAASPTVTDAIA) form a signal peptide, tat-type signal. Residues N222, H272, and Y281 contribute to the active site.

This sequence belongs to the polysaccharide lyase 8 family. Predicted to be exported by the Tat system. The position of the signal peptide cleavage has been experimentally proven.

It is found in the secreted. It carries out the reaction [hyaluronan](n) = n 3-(4-deoxy-beta-D-gluc-4-enuronosyl)-N-acetyl-D-glucosamine + H2O. Its function is as follows. Degrades hyaluronic acid (HA) exclusively into HA disaccharides (HA-2). Produced HA-2s confer anti-inflammatory properties leading to reduced immunopathology in the mouse model of acne. This is Hyaluronate lyase HylB from Cutibacterium acnes (Propionibacterium acnes).